Consider the following 386-residue polypeptide: MAYLFTSESVSEGHPDKIADQISDAILDAHLAEDRNSRVAAETLVTSGLVVLSGEITSQARVEPREIAREVIRDIGYTDPRIRFDAESCGVISSLHEQSGDISQGVDGGEEQGAGDQGLMFGYACRETEELMPMPITFSHRLVQELAHIRKETDKMPYLRPDSKSQVTIEYKEDRMTPRRVHTVVVSTQHDEGVPQKKIREDVRDILLPRALPTDLLDEDLILHVNPTGRFVTGGPHGDTGVTGRKIIVDTYGGKGAHGGGAFSGKDPSKVDRSATYAARHVAKNLVAAELCDEAEVQLAYAIGVAEPVSIDVSTNGTGVLPDTELCEMVREHFELSPSAIIDRLDLLKPRYQKTAAYGHFGRPTFPWEELTHVEALKRDAPAVAS.

An ATP-binding site is contributed by H14. D16 contacts Mg(2+). Position 42 (E42) interacts with K(+). The L-methionine site is built by E55 and Q98. A flexible loop region spans residues 98–108 (QSGDISQGVDG). Residues 162–164 (DSK), 230–231 (RF), D239, 245–246 (RK), A262, and K266 each bind ATP. D239 serves as a coordination point for L-methionine. L-methionine is bound at residue K270.

Belongs to the AdoMet synthase family. Homotetramer; dimer of dimers. Mg(2+) serves as cofactor. Requires K(+) as cofactor.

Its subcellular location is the cytoplasm. It catalyses the reaction L-methionine + ATP + H2O = S-adenosyl-L-methionine + phosphate + diphosphate. Its pathway is amino-acid biosynthesis; S-adenosyl-L-methionine biosynthesis; S-adenosyl-L-methionine from L-methionine: step 1/1. Functionally, catalyzes the formation of S-adenosylmethionine (AdoMet) from methionine and ATP. The overall synthetic reaction is composed of two sequential steps, AdoMet formation and the subsequent tripolyphosphate hydrolysis which occurs prior to release of AdoMet from the enzyme. This Salinibacter ruber (strain DSM 13855 / M31) protein is S-adenosylmethionine synthase.